A 213-amino-acid chain; its full sequence is Glycerol-3-phosphate acyltransferase (213 aa).

5 helical membrane-spanning segments follow: residues 3-23 (ILLA…VVVS), 51-71 (KAAI…VWLA), 78-98 (DVAI…PVFF), 115-135 (AVHP…AFFF), and 140-160 (LAAL…FGMP).

The protein belongs to the PlsY family. As to quaternary structure, probably interacts with PlsX.

It localises to the cell inner membrane. The catalysed reaction is an acyl phosphate + sn-glycerol 3-phosphate = a 1-acyl-sn-glycero-3-phosphate + phosphate. Its pathway is lipid metabolism; phospholipid metabolism. Functionally, catalyzes the transfer of an acyl group from acyl-phosphate (acyl-PO(4)) to glycerol-3-phosphate (G3P) to form lysophosphatidic acid (LPA). This enzyme utilizes acyl-phosphate as fatty acyl donor, but not acyl-CoA or acyl-ACP. This chain is Glycerol-3-phosphate acyltransferase, found in Burkholderia cenocepacia (strain HI2424).